Consider the following 223-residue polypeptide: Small ribosomal subunit protein uS3 (223 aa).

Positions 39-115 constitute a KH type-2 domain; sequence IRKYIEKNLA…RVFINIVEIK (77 aa).

It belongs to the universal ribosomal protein uS3 family. As to quaternary structure, part of the 30S ribosomal subunit. Forms a tight complex with proteins S10 and S14.

In terms of biological role, binds the lower part of the 30S subunit head. Binds mRNA in the 70S ribosome, positioning it for translation. This chain is Small ribosomal subunit protein uS3, found in Leuconostoc mesenteroides subsp. mesenteroides (strain ATCC 8293 / DSM 20343 / BCRC 11652 / CCM 1803 / JCM 6124 / NCDO 523 / NBRC 100496 / NCIMB 8023 / NCTC 12954 / NRRL B-1118 / 37Y).